Here is a 394-residue protein sequence, read N- to C-terminus: Elongation factor Tu 2 (394 aa).

The region spanning 10 to 204 (KPHVNVGTIG…ALDTYIPEPA (195 aa)) is the tr-type G domain. The segment at 19-26 (GHVDHGKT) is G1. 19–26 (GHVDHGKT) is a binding site for GTP. Thr26 serves as a coordination point for Mg(2+). The interval 60 to 64 (GITIN) is G2. Residues 81 to 84 (DCPG) form a G3 region. GTP is bound by residues 81 to 85 (DCPGH) and 136 to 139 (NKCD). A G4 region spans residues 136–139 (NKCD). The tract at residues 174–176 (SAL) is G5.

The protein belongs to the TRAFAC class translation factor GTPase superfamily. Classic translation factor GTPase family. EF-Tu/EF-1A subfamily. Monomer.

It localises to the cytoplasm. It carries out the reaction GTP + H2O = GDP + phosphate + H(+). In terms of biological role, GTP hydrolase that promotes the GTP-dependent binding of aminoacyl-tRNA to the A-site of ribosomes during protein biosynthesis. The chain is Elongation factor Tu 2 from Shewanella frigidimarina (strain NCIMB 400).